The following is a 337-amino-acid chain: DNA-directed RNA polymerase subunit alpha (337 aa).

Positions 1 to 232 (MVREEVRVCT…IDLFIPFLHA (232 aa)) are alpha N-terminal domain (alpha-NTD). Positions 266–337 (EISFQCIFID…FAIDLPKNKF (72 aa)) are alpha C-terminal domain (alpha-CTD).

The protein belongs to the RNA polymerase alpha chain family. In plastids the minimal PEP RNA polymerase catalytic core is composed of four subunits: alpha, beta, beta', and beta''. When a (nuclear-encoded) sigma factor is associated with the core the holoenzyme is formed, which can initiate transcription.

The protein localises to the plastid. It localises to the chloroplast. The enzyme catalyses RNA(n) + a ribonucleoside 5'-triphosphate = RNA(n+1) + diphosphate. DNA-dependent RNA polymerase catalyzes the transcription of DNA into RNA using the four ribonucleoside triphosphates as substrates. The polypeptide is DNA-directed RNA polymerase subunit alpha (Buxus microphylla (Littleleaf boxwood)).